The primary structure comprises 103 residues: Co-chaperonin GroES (103 aa).

It belongs to the GroES chaperonin family. As to quaternary structure, heptamer of 7 subunits arranged in a ring. Interacts with the chaperonin GroEL.

It is found in the cytoplasm. In terms of biological role, together with the chaperonin GroEL, plays an essential role in assisting protein folding. The GroEL-GroES system forms a nano-cage that allows encapsulation of the non-native substrate proteins and provides a physical environment optimized to promote and accelerate protein folding. GroES binds to the apical surface of the GroEL ring, thereby capping the opening of the GroEL channel. This Nostoc punctiforme (strain ATCC 29133 / PCC 73102) protein is Co-chaperonin GroES.